The primary structure comprises 692 residues: Translation initiation factor IF-2 (692 aa).

Residues 194 to 363 (PRPPIVTVMG…LLVAEMEDLK (170 aa)) enclose the tr-type G domain. Positions 203-210 (GHVDHGKT) are G1. GTP is bound at residue 203-210 (GHVDHGKT). Residues 228-232 (GITQH) are G2. The tract at residues 249–252 (DTPG) is G3. GTP contacts are provided by residues 249–253 (DTPGH) and 303–306 (NKID). Residues 303-306 (NKID) form a G4 region. The tract at residues 339-341 (SAK) is G5.

It belongs to the TRAFAC class translation factor GTPase superfamily. Classic translation factor GTPase family. IF-2 subfamily.

It localises to the cytoplasm. In terms of biological role, one of the essential components for the initiation of protein synthesis. Protects formylmethionyl-tRNA from spontaneous hydrolysis and promotes its binding to the 30S ribosomal subunits. Also involved in the hydrolysis of GTP during the formation of the 70S ribosomal complex. In Thermoanaerobacter sp. (strain X514), this protein is Translation initiation factor IF-2.